Consider the following 874-residue polypeptide: MKSSEIRQKFLQFFQSKGHTIVPSSSLVPANDPTLLFTNSGMVQFKDVFTGKEARAYKRATSSQRSVRAGGKHNDLENVGYTARHHTFFEMLGNFSFGDYFKREAIQYAWELLTQVYRLPAEKLWVTVYQEDDEAYDIWAKEVGVPAERIIRIGDNKGARYASDNFWQMADTGPCGPCSEIFYDHGPEIWGGPPGSLEEDGDRYIEIWNLVFMQFERDAAGNMERLPKPCVDTGMGLERIAAVLQHVHSNYEIDLFQKLIAAAARETGVKDLADNSLKVIADHIRACAFLIVDGIIPSNEGRGYVLRRIVRRALRHGYKLGQTKPFFHRLVPDLVAEMGEAYPELAQVAERVAQVLRQEEKRFGETLEHGMKILDGALAKVAKGDPLDGTTLFTLYDTYGFPVDLTADICRERGVEVDMAGFEAAMQRQREQARAAGKFKMAEGLSYEGAETRFEGYESLELSGVKVTALYVEGTQVEQVSAGQDAVVVLDATPFYAESGGQVGDTGLLEAGGVRFAVADTLKIQPGVFGHHGTLEAGALKVGDTLLARVDAVRRARTVRNHSATHLMHKALREVLGAHVQQRGSLVDPDKTRFDFAHDAPMTAEQIARVEAIVNAEVLANQATEAKVMAYDDAVKGGAMALFGEKYGDTVRVLDIGFSRELCGGTHVRRTGDIGLFKVVSEGGVAAGVRRIEAITGDNALAWVQDQNVLLQRAAGVLRAPAHELPERIAQVQEQLKALEKELEQARTKLAASAGNDLAATATVEVKGIKVLAASIGDVDPKALRGMVDNLKDRLKPAVVLLAAGSADGKISLVGGVTADLTGRIKAGDLVGFVAGQVGGKGGGRPDMAMGGGTDLAALPAAVASVQKWVDERL.

Residues H562, H566, C663, and H667 each contribute to the Zn(2+) site.

The protein belongs to the class-II aminoacyl-tRNA synthetase family. Zn(2+) serves as cofactor.

It localises to the cytoplasm. It catalyses the reaction tRNA(Ala) + L-alanine + ATP = L-alanyl-tRNA(Ala) + AMP + diphosphate. Functionally, catalyzes the attachment of alanine to tRNA(Ala) in a two-step reaction: alanine is first activated by ATP to form Ala-AMP and then transferred to the acceptor end of tRNA(Ala). Also edits incorrectly charged Ser-tRNA(Ala) and Gly-tRNA(Ala) via its editing domain. The sequence is that of Alanine--tRNA ligase from Bordetella parapertussis (strain 12822 / ATCC BAA-587 / NCTC 13253).